The primary structure comprises 367 residues: MSLSRVSVTAVRNLHPVTFSPSPRINLLYGANGSGKTSVLEAIHLLGLARSFRSARLLPVIQYEQLACTVFGQVELAQGGHSSLGISRDRQGEFQIRIDGQNARSAAQLAEILPLQLINPDSFRLLEGAPKIRRQFLDWGVFHVEPRFMSTWQRLQKALRQRNSWLRHGTLDAASQAAWDRELCQASAEIDEYRRAYIKALKPVFERTLGELLQLEGLTLSYYRGWDKDRELSEVLATALHRDQQMGHTQAGPQRADLRLRLGGHNAADILSRGQQKLVVCALRIAQGHLVSQARRGQCIYLVDDLPSELDEQHRRALCRLLEDLRCQVFITCVDHELLREGWQTETPVALFHVEQGRITQTHDHRE.

Position 30–37 (30–37 (GANGSGKT)) interacts with ATP.

The protein belongs to the RecF family.

The protein localises to the cytoplasm. The RecF protein is involved in DNA metabolism; it is required for DNA replication and normal SOS inducibility. RecF binds preferentially to single-stranded, linear DNA. It also seems to bind ATP. The sequence is that of DNA replication and repair protein RecF from Pseudomonas fluorescens (strain ATCC BAA-477 / NRRL B-23932 / Pf-5).